The primary structure comprises 59 residues: Small ribosomal subunit protein bS21 (59 aa).

The interval 39 to 59 (ETPVEKYKRKQRLKNRTKRRR) is disordered. Residues 45–59 (YKRKQRLKNRTKRRR) show a composition bias toward basic residues.

This sequence belongs to the bacterial ribosomal protein bS21 family.

This is Small ribosomal subunit protein bS21 from Prochlorococcus marinus (strain SARG / CCMP1375 / SS120).